Consider the following 332-residue polypeptide: Acetyl-coenzyme A carboxylase carboxyl transferase subunit beta (332 aa).

The region spanning 24–293 (LWIKCPDSGH…PEVIVESEPE (270 aa)) is the CoA carboxyltransferase N-terminal domain. Residues 288–332 (VESEPEPEPEPVVAEIIPPTSDLPVSAPAPAPVAAQTPAPAAPSA) form a disordered region. The segment covering 298–332 (PVVAEIIPPTSDLPVSAPAPAPVAAQTPAPAAPSA) has biased composition (low complexity).

The protein belongs to the AccD/PCCB family. Acetyl-CoA carboxylase is a heterohexamer composed of biotin carboxyl carrier protein (AccB), biotin carboxylase (AccC) and two subunits each of ACCase subunit alpha (AccA) and ACCase subunit beta (AccD).

The protein resides in the cytoplasm. The catalysed reaction is N(6)-carboxybiotinyl-L-lysyl-[protein] + acetyl-CoA = N(6)-biotinyl-L-lysyl-[protein] + malonyl-CoA. It participates in lipid metabolism; malonyl-CoA biosynthesis; malonyl-CoA from acetyl-CoA: step 1/1. In terms of biological role, component of the acetyl coenzyme A carboxylase (ACC) complex. Biotin carboxylase (BC) catalyzes the carboxylation of biotin on its carrier protein (BCCP) and then the CO(2) group is transferred by the transcarboxylase to acetyl-CoA to form malonyl-CoA. The chain is Acetyl-coenzyme A carboxylase carboxyl transferase subunit beta from Rhodopseudomonas palustris (strain BisB18).